A 269-amino-acid polypeptide reads, in one-letter code: MGINIVDTTLRDGEQKAGIALSVQDKVEIAKIISEMGVHQIEAGIPAMGGDEKISVSKIAALGLPSKIAAWNRMSTKDIDTSIECGVDIVHISSPVSDLQIKTKLEKDRKWVAENLKRTVIYALEKDCEVTVGLEDSSRADLNFLIQLCEMIFALGVKRVRYADTVGIMEPKELYSQIKKIRDKVPIDIEIHVHNDFGMAISNSFAAFKAGAKFADCTITGMGERAGNCDFLKFVKVIQELTGEKIYTGDFEDIIEKENEIKKILRLNW.

The region spanning 3 to 255 (INIVDTTLRD…IYTGDFEDII (253 aa)) is the Pyruvate carboxyltransferase domain.

Belongs to the alpha-IPM synthase/homocitrate synthase family. As to quaternary structure, heterodimer of an alpha and an omega chain.

It catalyses the reaction acetyl-CoA + 2-oxoglutarate + H2O = (2R)-homocitrate + CoA + H(+). Functionally, this protein is a Fe-Mo-cofactor biosynthetic component. This Clostridium pasteurianum protein is Homocitrate synthase subunit alpha (nifV-ALPHA).